A 727-amino-acid polypeptide reads, in one-letter code: Sodium-dependent neutral amino acid transporter SLC6A17 (727 aa).

The Cytoplasmic portion of the chain corresponds to 1–68 (MPKNSKVTQR…DRPAWNSKLQ (68 aa)). Serine 13 and serine 20 each carry phosphoserine. The helical transmembrane segment at 69-89 (YILAQIGFSVGLGNIWRFPYL) threads the bilayer. At 90 to 96 (CQKNGGG) the chain is on the extracellular side. Residues 97–116 (AYLVPYLVLLIIIGIPLFFL) traverse the membrane as a helical segment. The Cytoplasmic portion of the chain corresponds to 117 to 140 (ELAVGQRIRRGSIGVWHYVCPRLG). Residues 141–161 (GIGFSSCIVCLFVGLYYNVII) traverse the membrane as a helical segment. Over 162-224 (GWSVFYFFKS…NSISESGGLN (63 aa)) the chain is Extracellular. N-linked (GlcNAc...) asparagine glycosylation is present at asparagine 186. Residues 225-243 (WKMTLCLLVAWSIVGMAVV) traverse the membrane as a helical segment. Topologically, residues 244 to 251 (KGIQSSGK) are cytoplasmic. The helical transmembrane segment at 252-269 (VMYFSSLFPYVVLACFLV) threads the bilayer. Over 270–304 (RGLLLRGAVDGILHMFTPKLDKMLDPQVWREAATQ) the chain is Extracellular. Residues 305-322 (VFFALGLGFGGVIAFSSY) traverse the membrane as a helical segment. At 323–333 (NKQDNNCHFDA) the chain is on the cytoplasmic side. A helical transmembrane segment spans residues 334–355 (ALVSFINFFTSVLATLVVFAVL). Topologically, residues 356–451 (GFKANIMNEK…FIAFTEAMTH (96 aa)) are extracellular. Phosphotyrosine is present on tyrosine 377. A glycan (N-linked (GlcNAc...) asparagine) is linked at asparagine 393. Residues 452 to 471 (FPASPFWSVMFFLMLINLGL) form a helical membrane-spanning segment. At 472 to 494 (GSMIGTMAGITTPIIDTFKVPKE) the chain is on the cytoplasmic side. A helical transmembrane segment spans residues 495–513 (MFTVGCCVFAFFVGLLFVQ). Residues 514 to 528 (RSGNYFVTMFDDYSA) lie on the Extracellular side of the membrane. The chain crosses the membrane as a helical span at residues 529–549 (TLPLTVIVILENIAVAWIYGT). At 550 to 569 (KKFMQELTEMLGFQPYRFYF) the chain is on the cytoplasmic side. The chain crosses the membrane as a helical span at residues 570–591 (YMWKFVSPLCMAVLTTASIIQL). Residues 592 to 618 (GVSPPGYSAWIKEEAAERYLYFPNWAM) are Extracellular-facing. Residues 619 to 641 (ALLITLIAVATLPIPVVFILRHF) form a helical membrane-spanning segment. The Cytoplasmic portion of the chain corresponds to 642 to 727 (HLLSDGSNTL…LLASTPESEL (86 aa)). A phosphoserine mark is found at serine 665 and serine 701. The interval 680–727 (VPSEAPSPMPTHRSYLGPGSTSPLDNSNNPNGRYGSGYLLASTPESEL) is disordered. The segment covering 698–710 (GSTSPLDNSNNPN) has biased composition (polar residues).

The protein belongs to the sodium:neurotransmitter symporter (SNF) (TC 2.A.22) family. As to expression, expressed in the brain. The strongest expression levels in embryonic, postnatal, and adult stages are found in both cortical and hippocampal tissues.

Its subcellular location is the cytoplasmic vesicle. It localises to the secretory vesicle. It is found in the synaptic vesicle membrane. The protein localises to the postsynapse. The protein resides in the presynapse. It catalyses the reaction L-proline(in) + Na(+)(in) = L-proline(out) + Na(+)(out). It carries out the reaction L-leucine(in) + Na(+)(in) = L-leucine(out) + Na(+)(out). The catalysed reaction is glycine(in) + Na(+)(in) = glycine(out) + Na(+)(out). The enzyme catalyses L-alanine(in) + Na(+)(in) = L-alanine(out) + Na(+)(out). It catalyses the reaction L-glutamine(in) + Na(+)(in) = L-glutamine(out) + Na(+)(out). Its function is as follows. Synaptic vesicle transporter with apparent selectivity for neutral amino acids. The transport is sodium-coupled but chloride-independent, likely driven by the proton electrochemical gradient generated by vacuolar H(+)-ATPase in an overall electrogenic mechanism. May contribute to the synaptic uptake of neurotransmitter precursors in a process coupled in part to vesicle exocytosis. This chain is Sodium-dependent neutral amino acid transporter SLC6A17, found in Mus musculus (Mouse).